The primary structure comprises 344 residues: Arginine N-succinyltransferase (344 aa).

Leucine 125 lines the succinyl-CoA pocket. The active-site Proton donor is histidine 229.

It belongs to the arginine N-succinyltransferase family.

The enzyme catalyses succinyl-CoA + L-arginine = N(2)-succinyl-L-arginine + CoA + H(+). Its pathway is amino-acid degradation; L-arginine degradation via AST pathway; L-glutamate and succinate from L-arginine: step 1/5. Its function is as follows. Catalyzes the transfer of succinyl-CoA to arginine to produce N(2)-succinylarginine. This Escherichia coli O17:K52:H18 (strain UMN026 / ExPEC) protein is Arginine N-succinyltransferase.